The primary structure comprises 243 residues: Benzil reductase ((S)-benzoin forming) (243 aa).

NADP(+) contacts are provided by I6, N80, Y147, K151, and T184. The active-site Proton acceptor is the Y147.

Belongs to the short-chain dehydrogenases/reductases (SDR) family.

It is found in the cytoplasm. It carries out the reaction (S)-benzoin + NADP(+) = benzil + NADPH + H(+). Its function is as follows. Reduces benzil stereospecifically to (S)-benzoin. In Bacillus subtilis (strain 168), this protein is Benzil reductase ((S)-benzoin forming) (yueD).